Consider the following 196-residue polypeptide: GTP cyclohydrolase 1 (196 aa).

Zn(2+)-binding residues include Cys86, His89, and Cys157.

Belongs to the GTP cyclohydrolase I family. In terms of assembly, toroid-shaped homodecamer, composed of two pentamers of five dimers.

The catalysed reaction is GTP + H2O = 7,8-dihydroneopterin 3'-triphosphate + formate + H(+). It functions in the pathway cofactor biosynthesis; 7,8-dihydroneopterin triphosphate biosynthesis; 7,8-dihydroneopterin triphosphate from GTP: step 1/1. In Parabacteroides distasonis (strain ATCC 8503 / DSM 20701 / CIP 104284 / JCM 5825 / NCTC 11152), this protein is GTP cyclohydrolase 1.